We begin with the raw amino-acid sequence, 1096 residues long: Adenylate-forming reductase Nps9 (1096 aa).

The segment at 39-352 (DDTLTEISFL…TTEFGAPTQL (314 aa)) is adenylation (A) domain. AMP is bound by residues His236, 339–340 (VQ), Thr344, and 425–428 (IIGR). The region spanning 569 to 656 (EWTVSTLEHW…LLADRVAKIA (88 aa)) is the Carrier domain. Residue Ser605 is modified to O-(pantetheine 4'-phosphoryl)serine. The segment at 716-952 (LTGSTGGLGS…MPAEKVSAAI (237 aa)) is reductase (R) domain. NADP(+)-binding positions include 720–723 (TGGL), 807–809 (SAW), Tyr880, and Lys884.

This sequence belongs to the adenylate-forming reductase family.

Adenylate-forming reductase, a natural product biosynthesis enzyme that resembles non-ribosomal peptide synthetases, yet serves to modify one substrate, rather than to condense two or more building blocks. The A-domain preferentially accepts L-threonine as substrate. The natural product of the enzyme is not yet known. The chain is Adenylate-forming reductase Nps9 from Serpula lacrymans var. lacrymans (strain S7.9) (Dry rot fungus).